A 57-amino-acid polypeptide reads, in one-letter code: MLKWALIFFVISLIAGVFGFTGISAAAAGVARILFFIAVVIFLVFLVLALMAGSAIV.

The next 2 helical transmembrane spans lie at 4 to 24 (WALI…TGIS) and 33 to 53 (ILFF…LMAG).

It belongs to the UPF0391 family.

Its subcellular location is the cell membrane. The polypeptide is UPF0391 membrane protein Atu4467 (Agrobacterium fabrum (strain C58 / ATCC 33970) (Agrobacterium tumefaciens (strain C58))).